A 604-amino-acid polypeptide reads, in one-letter code: Elongation factor 4 (604 aa).

A tr-type G domain is found at K10–S191. GTP contacts are provided by residues D22–T27 and N138–D141.

It belongs to the TRAFAC class translation factor GTPase superfamily. Classic translation factor GTPase family. LepA subfamily.

It is found in the cell inner membrane. It carries out the reaction GTP + H2O = GDP + phosphate + H(+). Required for accurate and efficient protein synthesis under certain stress conditions. May act as a fidelity factor of the translation reaction, by catalyzing a one-codon backward translocation of tRNAs on improperly translocated ribosomes. Back-translocation proceeds from a post-translocation (POST) complex to a pre-translocation (PRE) complex, thus giving elongation factor G a second chance to translocate the tRNAs correctly. Binds to ribosomes in a GTP-dependent manner. This Helicobacter pylori (strain P12) protein is Elongation factor 4.